The following is a 256-amino-acid chain: Type III pantothenate kinase (256 aa).

Position 6–13 (6–13 (DIGNTNIV)) interacts with ATP. 107 to 110 (GADI) serves as a coordination point for substrate. The Proton acceptor role is filled by Asp109. Asp129 provides a ligand contact to K(+). Residue Thr132 participates in ATP binding. Thr184 lines the substrate pocket.

This sequence belongs to the type III pantothenate kinase family. In terms of assembly, homodimer. It depends on NH4(+) as a cofactor. K(+) serves as cofactor.

The protein localises to the cytoplasm. It catalyses the reaction (R)-pantothenate + ATP = (R)-4'-phosphopantothenate + ADP + H(+). Its pathway is cofactor biosynthesis; coenzyme A biosynthesis; CoA from (R)-pantothenate: step 1/5. Functionally, catalyzes the phosphorylation of pantothenate (Pan), the first step in CoA biosynthesis. The polypeptide is Type III pantothenate kinase (Bifidobacterium longum (strain DJO10A)).